We begin with the raw amino-acid sequence, 226 residues long: ATP synthase F(0) complex subunit a (226 aa).

6 helical membrane-spanning segments follow: residues 6–26, 68–88, 97–117, 138–158, 164–184, and 189–209; these read FASF…IVLF, WALM…LGLL, QLSM…ITGF, IPML…ALAV, ITAG…LMSI, and ALIT…VAMI.

This sequence belongs to the ATPase A chain family. Component of the ATP synthase complex composed at least of ATP5F1A/subunit alpha, ATP5F1B/subunit beta, ATP5MC1/subunit c (homooctomer), MT-ATP6/subunit a, MT-ATP8/subunit 8, ATP5ME/subunit e, ATP5MF/subunit f, ATP5MG/subunit g, ATP5MK/subunit k, ATP5MJ/subunit j, ATP5F1C/subunit gamma, ATP5F1D/subunit delta, ATP5F1E/subunit epsilon, ATP5PF/subunit F6, ATP5PB/subunit b, ATP5PD/subunit d, ATP5PO/subunit OSCP. ATP synthase complex consists of a soluble F(1) head domain (subunits alpha(3) and beta(3)) - the catalytic core - and a membrane F(0) domain - the membrane proton channel (subunits c, a, 8, e, f, g, k and j). These two domains are linked by a central stalk (subunits gamma, delta, and epsilon) rotating inside the F1 region and a stationary peripheral stalk (subunits F6, b, d, and OSCP). Interacts with DNAJC30; interaction is direct.

The protein localises to the mitochondrion inner membrane. The enzyme catalyses H(+)(in) = H(+)(out). Subunit a, of the mitochondrial membrane ATP synthase complex (F(1)F(0) ATP synthase or Complex V) that produces ATP from ADP in the presence of a proton gradient across the membrane which is generated by electron transport complexes of the respiratory chain. ATP synthase complex consist of a soluble F(1) head domain - the catalytic core - and a membrane F(1) domain - the membrane proton channel. These two domains are linked by a central stalk rotating inside the F(1) region and a stationary peripheral stalk. During catalysis, ATP synthesis in the catalytic domain of F(1) is coupled via a rotary mechanism of the central stalk subunits to proton translocation. With the subunit c (ATP5MC1), forms the proton-conducting channel in the F(0) domain, that contains two crucial half-channels (inlet and outlet) that facilitate proton movement from the mitochondrial intermembrane space (IMS) into the matrix. Protons are taken up via the inlet half-channel and released through the outlet half-channel, following a Grotthuss mechanism. The chain is ATP synthase F(0) complex subunit a from Ovis aries (Sheep).